The sequence spans 846 residues: Envelope glycoprotein gp160 (846 aa).

An N-terminal signal peptide occupies residues 1-21; the sequence is MSGKIQLLVAFLLTSACLIYC. Residues 22–671 lie on the Extracellular side of the membrane; that stretch reads TKYVTVFYGV…LTSWIKYIQY (650 aa). N-linked (GlcNAc...) asparagine; by host glycosylation occurs at Asn36. Cys43 and Cys56 are oxidised to a cystine. N-linked (GlcNAc...) asparagine; by host glycans are attached at residues Asn69, Asn113, Asn132, Asn142, Asn157, Asn184, Asn197, Asn229, Asn232, Asn239, Asn263, Asn269, Asn280, Asn291, Asn301, Asn357, Asn363, Asn390, Asn400, Asn455, and Asn458. Intrachain disulfides connect Cys100–Cys205, Cys107–Cys196, Cys112–Cys154, Cys218–Cys248, and Cys228–Cys240. The tract at residues 112–153 is V1; it reads CNASTESAVATTSPSGPDMINDTDPCIQLNNCSGLREEDMVE. Positions 154-196 are V2; that stretch reads CQFNMTGLELDKKKQYSETWYSKDVVCESDNSTDRKRCYMNHC. The segment at 296-329 is V3; that stretch reads CRRPENKTVVPITLMSGRRFHSQKIINKKPRQAW. The cysteines at positions 296 and 330 are disulfide-linked. 2 disulfide bridges follow: Cys382/Cys438 and Cys389/Cys411. Positions 389–411 are V4; the sequence is CNMTWFLNWVENKTGQQHNYVPC. Residues 454–461 form a V5 region; that stretch reads DNRTNITF. Residues 504–524 are fusion peptide; sequence GVLVLGFLGFLTTAGAAMGAA. Residues 567–583 are immunosuppression; sequence LQARVTAIEKYLADQAR. 3 N-linked (GlcNAc...) asparagine; by host glycosylation sites follow: Asn603, Asn612, and Asn628. Positions 616–643 form a coiled coil; sequence QEWEHKIRFLEANISESLEQAQIQQEKN. The MPER; binding to GalCer stretch occupies residues 649–670; that stretch reads KLNSWDVFGNWFDLTSWIKYIQ. Residues 672–692 traverse the membrane as a helical segment; the sequence is GVMIVVGIVALRIVIYVVQML. The Cytoplasmic portion of the chain corresponds to 693–846; the sequence is SRLRKGYRPV…IRQGAEIALL (154 aa). Positions 699-702 match the YXXV motif; contains endocytosis signal motif; it reads YRPV. Residue Cys765 is the site of S-palmitoyl cysteine; by host attachment. The short motif at 845–846 is the Di-leucine internalization motif element; it reads LL.

In terms of assembly, the mature envelope protein (Env) consists of a homotrimer of non-covalently associated gp120-gp41 heterodimers. The resulting complex protrudes from the virus surface as a spike. There seems to be as few as 10 spikes on the average virion. Interacts with human CD4, CCR5 and CXCR4, to form a P4HB/PDI-CD4-CXCR4-gp120 complex. Gp120 also interacts with the C-type lectins CD209/DC-SIGN and CLEC4M/DC-SIGNR (collectively referred to as DC-SIGN(R)). Gp120 and gp41 interact with GalCer. As to quaternary structure, the mature envelope protein (Env) consists of a homotrimer of non-covalently associated gp120-gp41 heterodimers. The resulting complex protrudes from the virus surface as a spike. There seems to be as few as 10 spikes on the average virion. Post-translationally, specific enzymatic cleavages in vivo yield mature proteins. Envelope glycoproteins are synthesized as an inactive precursor that is heavily N-glycosylated and processed likely by host cell furin in the Golgi to yield the mature SU and TM proteins. The cleavage site between SU and TM requires the minimal sequence [KR]-X-[KR]-R. Palmitoylation of the transmembrane protein and of Env polyprotein (prior to its proteolytic cleavage) is essential for their association with host cell membrane lipid rafts. Palmitoylation is therefore required for envelope trafficking to classical lipid rafts, but not for viral replication.

The protein resides in the virion membrane. It is found in the host cell membrane. It localises to the host endosome membrane. Its function is as follows. The surface protein gp120 (SU) attaches the virus to the host lymphoid cell by binding to the primary receptor CD4. This interaction induces a structural rearrangement creating a high affinity binding site for a chemokine coreceptor like CXCR4 and/or CCR5. This peculiar 2 stage receptor-interaction strategy allows gp120 to maintain the highly conserved coreceptor-binding site in a cryptic conformation, protected from neutralizing antibodies. Since CD4 also displays a binding site for the disulfide-isomerase P4HB/PDI, a P4HB/PDI-CD4-CXCR4-gp120 complex may form. In that complex, P4HB/PDI could reach and reduce gp120 disulfide bonds, causing major conformational changes in gp120. TXN, another PDI family member could also be involved in disulfide rearrangements in Env during fusion. These changes are transmitted to the transmembrane protein gp41 and are thought to activate its fusogenic potential by unmasking its fusion peptide. In terms of biological role, the surface protein gp120 is a ligand for CD209/DC-SIGN and CLEC4M/DC-SIGNR, which are respectively found on dendritic cells (DCs), and on endothelial cells of liver sinusoids and lymph node sinuses. These interactions allow capture of viral particles at mucosal surfaces by these cells and subsequent transmission to permissive cells. DCs are professional antigen presenting cells, critical for host immunity by inducing specific immune responses against a broad variety of pathogens. They act as sentinels in various tissues where they take up antigen, process it, and present it to T-cells following migration to lymphoid organs. HIV subverts the migration properties of dendritic cells to gain access to CD4+ T-cells in lymph nodes. Virus transmission to permissive T-cells occurs either in trans (without DCs infection, through viral capture and transmission), or in cis (following DCs productive infection, through the usual CD4-gp120 interaction), thereby inducing a robust infection. In trans infection, bound virions remain infectious over days and it is proposed that they are not degraded, but protected in non-lysosomal acidic organelles within the DCs close to the cell membrane thus contributing to the viral infectious potential during DCs' migration from the periphery to the lymphoid tissues. On arrival at lymphoid tissues, intact virions recycle back to DCs' cell surface allowing virus transmission to CD4+ T-cells. Virion capture also seems to lead to MHC-II-restricted viral antigen presentation, and probably to the activation of HIV-specific CD4+ cells. The transmembrane protein gp41 (TM) acts as a class I viral fusion protein. Under the current model, the protein has at least 3 conformational states: pre-fusion native state, pre-hairpin intermediate state, and post-fusion hairpin state. During fusion of viral and target intracellular membranes, the coiled coil regions (heptad repeats) assume a trimer-of-hairpins structure, positioning the fusion peptide in close proximity to the C-terminal region of the ectodomain. The formation of this structure appears to drive apposition and subsequent fusion of viral and target cell membranes. Complete fusion occurs in host cell endosomes and is dynamin-dependent, however some lipid transfer might occur at the plasma membrane. The virus undergoes clathrin-dependent internalization long before endosomal fusion, thus minimizing the surface exposure of conserved viral epitopes during fusion and reducing the efficacy of inhibitors targeting these epitopes. Membranes fusion leads to delivery of the nucleocapsid into the cytoplasm. Functionally, the envelope glycoprotein gp160 precursor down-modulates cell surface CD4 antigen by interacting with it in the endoplasmic reticulum and blocking its transport to the cell surface. Its function is as follows. The gp120-gp41 heterodimer seems to contribute to T-cell depletion during HIV-1 infection. The envelope glycoproteins expressed on the surface of infected cells induce apoptosis through an interaction with uninfected cells expressing the receptor (CD4) and the coreceptors CXCR4 or CCR5. This type of bystander killing may be obtained by at least three distinct mechanisms. First, the interaction between the 2 cells can induce cellular fusion followed by nuclear fusion within the syncytium. Syncytia are condemned to die from apoptosis. Second, the 2 interacting cells may not fuse entirely and simply exchange plasma membrane lipids, after a sort of hemifusion process, followed by rapid death. Third, it is possible that virus-infected cells, on the point of undergoing apoptosis, fuse with CD4-expressing cells, in which case apoptosis is rapidly transmitted from one cell to the other and thus occurs in a sort of contagious fashion. In terms of biological role, the gp120-gp41 heterodimer allows rapid transcytosis of the virus through CD4 negative cells such as simple epithelial monolayers of the intestinal, rectal and endocervical epithelial barriers. Both gp120 and gp41 specifically recognize glycosphingolipids galactosyl-ceramide (GalCer) or 3' sulfo-galactosyl-ceramide (GalS) present in the lipid rafts structures of epithelial cells. Binding to these alternative receptors allows the rapid transcytosis of the virus through the epithelial cells. This transcytotic vesicle-mediated transport of virions from the apical side to the basolateral side of the epithelial cells does not involve infection of the cells themselves. The protein is Envelope glycoprotein gp160 (env) of Human immunodeficiency virus type 2 subtype A (isolate SBLISY) (HIV-2).